Here is a 577-residue protein sequence, read N- to C-terminus: Secreted LysM effector Lys4 (577 aa).

A signal peptide spans 1-19; that stretch reads MRALTAAVLFVAGLTPVLA. The 48-residue stretch at 38–85 folds into the LysM 1 domain; that stretch reads AWYTIVKGDGCDTVEKKFKITPEQFFKWNPDVSTDCVKNFWVGNSYCV. The segment covering 96–121 has biased composition (low complexity); sequence TSTTVKSSSTTQKTSSTSSKLSSSSK. Residues 96 to 135 are disordered; that stretch reads TSTTVKSSSTTQKTSSTSSKLSSSSKPVNTTTTPYSTRNP. Residues 122 to 135 show a composition bias toward polar residues; that stretch reads PVNTTTTPYSTRNP. Asn-124, Asn-140, Asn-216, and Asn-235 each carry an N-linked (GlcNAc...) asparagine glycan. LysM domains follow at residues 251–298, 328–375, and 408–455; these read NFYQ…YYCV, KWYQ…WYCV, and QYWL…YVCV. A compositionally biased stretch (low complexity) spans 464–485; that stretch reads SGSTTTITGPPTKGSNPPTTTT. Residues 464 to 490 form a disordered region; it reads SGSTTTITGPPTKGSNPPTTTTSGGGG. The LysM 5 domain occupies 510–558; sequence FWFRGKDGASLFCADIAKDAGVSLPDFLKWNPGVGSNCESLWADTWYCV.

The protein belongs to the secreted LysM effector family.

Might have a role in sequestration of chitin oligosaccharides (breakdown products of fungal cell walls that are released during invasion and act as triggers of host immunity) to dampen host defense. The protein is Secreted LysM effector Lys4 of Pochonia chlamydosporia (strain 123) (Metacordyceps chlamydosporia).